The primary structure comprises 947 residues: Protein translocase subunit SecA 1 (947 aa).

ATP-binding positions include Gln-83, 101–105 (GEGKT), and Asp-490. Residues 860 to 947 (AKAQEQTGQG…KTSKPTRRRG (88 aa)) are disordered. Residues 925-934 (TRRERREAAR) show a composition bias toward basic and acidic residues. Basic residues predominate over residues 935-947 (KQAKTSKPTRRRG).

Belongs to the SecA family. Monomer and homodimer. Part of the essential Sec protein translocation apparatus which comprises SecA, SecYEG and auxiliary proteins SecDF. Other proteins may also be involved.

The protein resides in the cell membrane. Its subcellular location is the cytoplasm. It carries out the reaction ATP + H2O + cellular proteinSide 1 = ADP + phosphate + cellular proteinSide 2.. Functionally, part of the Sec protein translocase complex. Interacts with the SecYEG preprotein conducting channel. Has a central role in coupling the hydrolysis of ATP to the transfer of proteins into and across the cell membrane, serving as an ATP-driven molecular motor driving the stepwise translocation of polypeptide chains across the membrane. This chain is Protein translocase subunit SecA 1, found in Mycobacterium sp. (strain KMS).